Consider the following 245-residue polypeptide: GDSL esterase/lipase At4g16220 (245 aa).

The N-terminal stretch at 1–24 (MSSLVSRCQVIALLVLFFFGVCLA) is a signal peptide. Ser37 (nucleophile) is an active-site residue.

The protein belongs to the 'GDSL' lipolytic enzyme family.

It is found in the secreted. The chain is GDSL esterase/lipase At4g16220 from Arabidopsis thaliana (Mouse-ear cress).